A 684-amino-acid chain; its full sequence is Cleavage and polyadenylation specificity factor subunit 3 (684 aa).

Serine 2 bears the N-acetylserine mark. Histidine 71, histidine 73, aspartate 75, histidine 76, histidine 158, and aspartate 179 together coordinate Zn(2+). Histidine 396 functions as the Proton donor in the catalytic mechanism. Histidine 418 provides a ligand contact to Zn(2+). Glycyl lysine isopeptide (Lys-Gly) (interchain with G-Cter in SUMO) cross-links involve residues lysine 462, lysine 465, and lysine 545. Serine 659 carries the phosphoserine modification. Position 681 is a phosphothreonine (threonine 681).

This sequence belongs to the metallo-beta-lactamase superfamily. RNA-metabolizing metallo-beta-lactamase-like family. CPSF3 subfamily. In terms of assembly, component of the cleavage and polyadenylation specificity factor (CPSF) complex, composed of CPSF1, CPSF2, CPSF3, CPSF4 and FIP1L1. Interacts with CPSF2, CSTF2 and SYMPK. Interacts with TUT1; the interaction is direct and mediates the recruitment of the CPSF complex on the 3'UTR of pre-mRNAs. Interacts with WDR33. Interacts with ZC3H3. Requires Zn(2+) as cofactor. Post-translationally, sumoylated on Lys-462, Lys-465 and Lys-545, preferentially by SUMO3.

It localises to the nucleus. Functionally, component of the cleavage and polyadenylation specificity factor (CPSF) complex that plays a key role in pre-mRNA 3'-end formation, recognizing the AAUAAA signal sequence and interacting with poly(A) polymerase and other factors to bring about cleavage and poly(A) addition. Has endonuclease activity, and functions as an mRNA 3'-end-processing endonuclease. Also involved in the histone 3'-end pre-mRNA processing. U7 snRNP-dependent protein that induces both the 3'-endoribonucleolytic cleavage of histone pre-mRNAs and acts as a 5' to 3' exonuclease for degrading the subsequent downstream cleavage product (DCP) of mature histone mRNAs. Cleavage occurs after the 5'-ACCCA-3' sequence in the histone pre-mRNA leaving a 3'hydroxyl group on the upstream fragment containing the stem loop (SL) and 5' phosphate on the downstream cleavage product (DCP) starting with CU nucleotides. The U7-dependent 5' to 3' exonuclease activity is processive and degrades the DCP RNA substrate even after complete removal of the U7-binding site. Binds to the downstream cleavage product (DCP) of histone pre-mRNAs and the cleaved DCP RNA substrate in a U7 snRNP dependent manner. Required for entering/progressing through S-phase of the cell cycle. Required for the selective processing of microRNAs (miRNAs) during embryonic stem cell differentiation via its interaction with ISY1. Required for the biogenesis of all miRNAs from the pri-miR-17-92 primary transcript except miR-92a. Only required for the biogenesis of miR-290 and miR-96 from the pri-miR-290-295 and pri-miR-96-183 primary transcripts, respectively. This Homo sapiens (Human) protein is Cleavage and polyadenylation specificity factor subunit 3 (CPSF3).